The primary structure comprises 80 residues: DNA-binding protein HU-like (80 aa).

Belongs to the bacterial histone-like protein family.

In terms of biological role, histone-like DNA-binding protein which is capable of wrapping DNA to stabilize it, and thus to prevent its denaturation under extreme environmental conditions. The protein is DNA-binding protein HU-like of Rickettsia conorii (strain ATCC VR-613 / Malish 7).